We begin with the raw amino-acid sequence, 352 residues long: DNA polymerase IV (352 aa).

The 182-residue stretch at 4 to 185 folds into the UmuC domain; it reads IIHVDMDCFF…LPLSKIPGVG (182 aa). Mg(2+) contacts are provided by D8 and D103. Residue E104 is part of the active site.

The protein belongs to the DNA polymerase type-Y family. Monomer. Mg(2+) is required as a cofactor.

It localises to the cytoplasm. It catalyses the reaction DNA(n) + a 2'-deoxyribonucleoside 5'-triphosphate = DNA(n+1) + diphosphate. In terms of biological role, poorly processive, error-prone DNA polymerase involved in untargeted mutagenesis. Copies undamaged DNA at stalled replication forks, which arise in vivo from mismatched or misaligned primer ends. These misaligned primers can be extended by PolIV. Exhibits no 3'-5' exonuclease (proofreading) activity. May be involved in translesional synthesis, in conjunction with the beta clamp from PolIII. The chain is DNA polymerase IV from Yersinia enterocolitica serotype O:8 / biotype 1B (strain NCTC 13174 / 8081).